A 385-amino-acid polypeptide reads, in one-letter code: GTPase Obg (385 aa).

One can recognise an Obg domain in the interval 1–159; it reads MHFIDQAEIE…RRLRLELKLI (159 aa). Residues 160-328 enclose the OBG-type G domain; it reads AEVGIVGMPN…LLQRVWQCLG (169 aa). Residues 166 to 173, 191 to 195, 213 to 216, 280 to 283, and 309 to 311 contribute to the GTP site; these read GMPNAGKS, FTTLQ, DIPG, NKID, and SAV. Residues Ser173 and Thr193 each coordinate Mg(2+).

It belongs to the TRAFAC class OBG-HflX-like GTPase superfamily. OBG GTPase family. In terms of assembly, monomer. It depends on Mg(2+) as a cofactor.

It is found in the cytoplasm. In terms of biological role, an essential GTPase which binds GTP, GDP and possibly (p)ppGpp with moderate affinity, with high nucleotide exchange rates and a fairly low GTP hydrolysis rate. Plays a role in control of the cell cycle, stress response, ribosome biogenesis and in those bacteria that undergo differentiation, in morphogenesis control. The chain is GTPase Obg from Synechococcus sp. (strain JA-3-3Ab) (Cyanobacteria bacterium Yellowstone A-Prime).